A 124-amino-acid chain; its full sequence is Fluoride-specific ion channel FluC (124 aa).

The next 4 helical transmembrane spans lie at 5-25, 32-52, 61-81, and 94-114; these read LLVS…AVWF, FAFG…ITLG, LLFV…SAEV, and LAVI…GILV. Positions 69 and 72 each coordinate Na(+).

It belongs to the fluoride channel Fluc/FEX (TC 1.A.43) family.

The protein resides in the cell inner membrane. It carries out the reaction fluoride(in) = fluoride(out). Its activity is regulated as follows. Na(+) is not transported, but it plays an essential structural role and its presence is essential for fluoride channel function. Functionally, fluoride-specific ion channel. Important for reducing fluoride concentration in the cell, thus reducing its toxicity. This chain is Fluoride-specific ion channel FluC, found in Haemophilus ducreyi (strain 35000HP / ATCC 700724).